A 160-amino-acid polypeptide reads, in one-letter code: Nucleotide-binding protein VP1617 (160 aa).

It belongs to the YajQ family.

Nucleotide-binding protein. This Vibrio parahaemolyticus serotype O3:K6 (strain RIMD 2210633) protein is Nucleotide-binding protein VP1617.